We begin with the raw amino-acid sequence, 282 residues long: Bifunctional protein FolD (282 aa).

NADP(+)-binding positions include glycine 164–serine 166, isoleucine 189, and isoleucine 230.

This sequence belongs to the tetrahydrofolate dehydrogenase/cyclohydrolase family. As to quaternary structure, homodimer.

It catalyses the reaction (6R)-5,10-methylene-5,6,7,8-tetrahydrofolate + NADP(+) = (6R)-5,10-methenyltetrahydrofolate + NADPH. The enzyme catalyses (6R)-5,10-methenyltetrahydrofolate + H2O = (6R)-10-formyltetrahydrofolate + H(+). Its pathway is one-carbon metabolism; tetrahydrofolate interconversion. Its function is as follows. Catalyzes the oxidation of 5,10-methylenetetrahydrofolate to 5,10-methenyltetrahydrofolate and then the hydrolysis of 5,10-methenyltetrahydrofolate to 10-formyltetrahydrofolate. This is Bifunctional protein FolD from Nitratiruptor sp. (strain SB155-2).